A 345-amino-acid chain; its full sequence is Phosphoribosylformylglycinamidine cyclo-ligase (345 aa).

The protein belongs to the AIR synthase family.

The protein resides in the cytoplasm. It catalyses the reaction 2-formamido-N(1)-(5-O-phospho-beta-D-ribosyl)acetamidine + ATP = 5-amino-1-(5-phospho-beta-D-ribosyl)imidazole + ADP + phosphate + H(+). It participates in purine metabolism; IMP biosynthesis via de novo pathway; 5-amino-1-(5-phospho-D-ribosyl)imidazole from N(2)-formyl-N(1)-(5-phospho-D-ribosyl)glycinamide: step 2/2. This chain is Phosphoribosylformylglycinamidine cyclo-ligase, found in Salmonella choleraesuis (strain SC-B67).